The sequence spans 182 residues: Adenine phosphoribosyltransferase (182 aa).

Belongs to the purine/pyrimidine phosphoribosyltransferase family. As to quaternary structure, homodimer.

The protein localises to the cytoplasm. It carries out the reaction AMP + diphosphate = 5-phospho-alpha-D-ribose 1-diphosphate + adenine. It participates in purine metabolism; AMP biosynthesis via salvage pathway; AMP from adenine: step 1/1. In terms of biological role, catalyzes a salvage reaction resulting in the formation of AMP, that is energically less costly than de novo synthesis. The chain is Adenine phosphoribosyltransferase from Sulfurimonas denitrificans (strain ATCC 33889 / DSM 1251) (Thiomicrospira denitrificans (strain ATCC 33889 / DSM 1251)).